Consider the following 953-residue polypeptide: UvrABC system protein A (953 aa).

33-40 (GLSGSGKS) lines the ATP pocket. ABC transporter domains are found at residues 320–599 (WGST…EESI) and 619–949 (GHDN…RYLK). 652 to 659 (GVSGSGKS) contributes to the ATP binding site. A C4-type zinc finger spans residues 752–778 (CEACQGDGLIKIEMHFLPDVYVKCDIC).

This sequence belongs to the ABC transporter superfamily. UvrA family. As to quaternary structure, forms a heterotetramer with UvrB during the search for lesions.

It is found in the cytoplasm. Its function is as follows. The UvrABC repair system catalyzes the recognition and processing of DNA lesions. UvrA is an ATPase and a DNA-binding protein. A damage recognition complex composed of 2 UvrA and 2 UvrB subunits scans DNA for abnormalities. When the presence of a lesion has been verified by UvrB, the UvrA molecules dissociate. This chain is UvrABC system protein A, found in Rickettsia bellii (strain RML369-C).